The following is a 239-amino-acid chain: tRNA (guanine-N(1)-)-methyltransferase (239 aa).

Residues G113 and I133 to L138 contribute to the S-adenosyl-L-methionine site. The segment at E218–G239 is disordered.

The protein belongs to the RNA methyltransferase TrmD family. Homodimer.

The protein resides in the cytoplasm. The enzyme catalyses guanosine(37) in tRNA + S-adenosyl-L-methionine = N(1)-methylguanosine(37) in tRNA + S-adenosyl-L-homocysteine + H(+). In terms of biological role, specifically methylates guanosine-37 in various tRNAs. The sequence is that of tRNA (guanine-N(1)-)-methyltransferase from Nitrobacter winogradskyi (strain ATCC 25391 / DSM 10237 / CIP 104748 / NCIMB 11846 / Nb-255).